We begin with the raw amino-acid sequence, 122 residues long: MIQPRSILEVADNSGAKRVQCIRVLGGSNRKYASLGDVIIVSVKEALPDSNIKKGSVAKAVIVRLRRSVRRNDGSYIRFDQNAVVLVNNQLEPIGTRIFGPVARELRWKEFTKIVSLAPEVI.

The protein belongs to the universal ribosomal protein uL14 family. In terms of assembly, part of the 50S ribosomal subunit. Forms a cluster with proteins L3 and L19. In the 70S ribosome, L14 and L19 interact and together make contacts with the 16S rRNA in bridges B5 and B8.

In terms of biological role, binds to 23S rRNA. Forms part of two intersubunit bridges in the 70S ribosome. This is Large ribosomal subunit protein uL14 from Thermodesulfovibrio yellowstonii (strain ATCC 51303 / DSM 11347 / YP87).